Consider the following 226-residue polypeptide: Ribose-5-phosphate isomerase A (226 aa).

Substrate is bound by residues Thr26 to Thr29, Asp82 to Asp85, and Lys95 to Gly98. Catalysis depends on Glu104, which acts as the Proton acceptor. Lys122 is a substrate binding site.

It belongs to the ribose 5-phosphate isomerase family. Homodimer.

It catalyses the reaction aldehydo-D-ribose 5-phosphate = D-ribulose 5-phosphate. It participates in carbohydrate degradation; pentose phosphate pathway; D-ribose 5-phosphate from D-ribulose 5-phosphate (non-oxidative stage): step 1/1. Catalyzes the reversible conversion of ribose-5-phosphate to ribulose 5-phosphate. The chain is Ribose-5-phosphate isomerase A from Streptococcus thermophilus (strain CNRZ 1066).